Consider the following 504-residue polypeptide: Tyrosine-protein kinase HCK (504 aa).

Glycine 2 carries N-myristoyl glycine lipidation. A lipid anchor (S-palmitoyl cysteine) is attached at cysteine 3. A Phosphothreonine modification is found at threonine 15. Tyrosine 30 is subject to Phosphotyrosine. The span at 34-49 shows a compositional bias: polar residues; it reads PTSTIKPGPNSNNRNT. The tract at residues 34–53 is disordered; that stretch reads PTSTIKPGPNSNNRNTPGIG. The SH3 domain maps to 56–116; the sequence is SEDIIVVALY…PSNYVARVDS (61 aa). The 98-residue stretch at 122-219 folds into the SH2 domain; the sequence is WFFKGISRKD…GLCQKLSVPC (98 aa). Position 180 is a phosphothreonine (threonine 180). At tyrosine 187 the chain carries Phosphotyrosine. A Protein kinase domain is found at 240 to 493; sequence LKLEKKLGAG…YIQSVLDDFY (254 aa). Residues 246–254 and lysine 268 contribute to the ATP site; that span reads LGAGQFGEV. Aspartate 359 acts as the Proton acceptor in catalysis. Phosphotyrosine; by autocatalysis is present on tyrosine 389. Phosphoserine is present on serine 440. Tyrosine 500 is modified (phosphotyrosine).

Belongs to the protein kinase superfamily. Tyr protein kinase family. SRC subfamily. In terms of assembly, interacts with ADAM15. Interacts with FASLG. Interacts with ARRB1 and ARRB2. Interacts with FCGR1A; the interaction may be indirect. Interacts with IL6ST. Interacts (via SH3 domain) with ELMO1. Interacts (via SH3 domain) with TP73. Interacts with YAP1. Interacts with ABL1 and ITGB1, and thereby recruits ABL1 to activated ITGB1. Interacts (via SH2 domain) with FLT3 (tyrosine phosphorylated). Interacts with CBL. Interacts with VAV1, WAS and RAPGEF1. Interacts (via SH3 domain) with WDCP. Phosphorylated on several tyrosine residues. Autophosphorylated. Becomes rapidly phosphorylated upon activation of the immunoglobulin receptors FCGR1A and FCGR2A. Phosphorylation at Tyr-389 increases kinase activity. Phosphorylation at Tyr-500 inhibits kinase activity. Kinase activity is not required for phosphorylation at Tyr-500, suggesting that this site may be a target of other kinases. In terms of processing, ubiquitinated by CBL, leading to its degradation via the proteasome. Post-translationally, palmitoylation requires prior myristoylation. Palmitoylation is required for caveolar localization.

The protein localises to the cytoplasmic vesicle. It is found in the secretory vesicle. Its subcellular location is the cytoplasm. The protein resides in the cytosol. It localises to the cell membrane. The protein localises to the membrane. It is found in the caveola. Its subcellular location is the cell junction. The protein resides in the focal adhesion. It localises to the cytoskeleton. The protein localises to the golgi apparatus. It is found in the lysosome. Its subcellular location is the nucleus. The enzyme catalyses L-tyrosyl-[protein] + ATP = O-phospho-L-tyrosyl-[protein] + ADP + H(+). Subject to autoinhibition, mediated by intramolecular interactions involving the SH2 and SH3 domains. Kinase activity is also regulated by phosphorylation at regulatory tyrosine residues. Phosphorylation at Tyr-389 is required for optimal activity. Phosphorylation at Tyr-500 inhibits kinase activity. Non-receptor tyrosine-protein kinase found in hematopoietic cells that transmits signals from cell surface receptors and plays an important role in the regulation of innate immune responses, including neutrophil, monocyte, macrophage and mast cell functions, phagocytosis, cell survival and proliferation, cell adhesion and migration. Acts downstream of receptors that bind the Fc region of immunoglobulins, such as FCGR1A and FCGR2A, but also CSF3R, PLAUR, the receptors for IFNG, IL2, IL6 and IL8, and integrins, such as ITGB1 and ITGB2. During the phagocytic process, mediates mobilization of secretory lysosomes, degranulation, and activation of NADPH oxidase to bring about the respiratory burst. Plays a role in the release of inflammatory molecules. Promotes reorganization of the actin cytoskeleton and actin polymerization, formation of podosomes and cell protrusions. Inhibits TP73-mediated transcription activation and TP73-mediated apoptosis. Phosphorylates CBL in response to activation of immunoglobulin gamma Fc region receptors. Phosphorylates ADAM15, BCR, ELMO1, FCGR2A, GAB1, GAB2, RAPGEF1, STAT5B, TP73, VAV1 and WAS. The chain is Tyrosine-protein kinase HCK (HCK) from Macaca fascicularis (Crab-eating macaque).